The following is a 289-amino-acid chain: Urease accessory protein UreD (289 aa).

Belongs to the UreD family. In terms of assembly, ureD, UreF and UreG form a complex that acts as a GTP-hydrolysis-dependent molecular chaperone, activating the urease apoprotein by helping to assemble the nickel containing metallocenter of UreC. The UreE protein probably delivers the nickel.

It is found in the cytoplasm. Its function is as follows. Required for maturation of urease via the functional incorporation of the urease nickel metallocenter. This chain is Urease accessory protein UreD, found in Magnetococcus marinus (strain ATCC BAA-1437 / JCM 17883 / MC-1).